Reading from the N-terminus, the 85-residue chain is Makatoxin-3 (85 aa).

An N-terminal signal peptide occupies residues 1 to 19; that stretch reads MNYLIVISFALLLMTGVES. The region spanning 21–83 is the LCN-type CS-alpha/beta domain; it reads RDAYIAKKEN…VPIRIPGPCI (63 aa). 4 disulfide bridges follow: Cys-31-Cys-82, Cys-35-Cys-55, Cys-41-Cys-65, and Cys-45-Cys-67.

It belongs to the long (4 C-C) scorpion toxin superfamily. Sodium channel inhibitor family. Alpha subfamily. In terms of tissue distribution, expressed by the venom gland.

The protein localises to the secreted. In terms of biological role, this protein markedly relaxes the rat carbachol-precontracted anococcygeus muscle. This relaxation is inhibited by the inhibitor of nitric oxide (NO) synthase, N-nitro-L-arginine methyl ester (L-NAME), suggesting that the response induced by this protein is NO-mediated. This chain is Makatoxin-3, found in Olivierus martensii (Manchurian scorpion).